We begin with the raw amino-acid sequence, 500 residues long: Cytochrome P450 2C11 (500 aa).

C435 provides a ligand contact to heme.

It belongs to the cytochrome P450 family. The cofactor is heme. Liver and kidney; male-specific.

It localises to the endoplasmic reticulum membrane. Its subcellular location is the microsome membrane. The catalysed reaction is an organic molecule + reduced [NADPH--hemoprotein reductase] + O2 = an alcohol + oxidized [NADPH--hemoprotein reductase] + H2O + H(+). It catalyses the reaction testosterone + reduced [NADPH--hemoprotein reductase] + O2 = 2alpha,17beta-dihydroxyandrost-4-en-3-one + oxidized [NADPH--hemoprotein reductase] + H2O + H(+). It carries out the reaction testosterone + reduced [NADPH--hemoprotein reductase] + O2 = 16alpha,17beta-dihydroxyandrost-4-en-3-one + oxidized [NADPH--hemoprotein reductase] + H2O + H(+). The enzyme catalyses (5Z,8Z,11Z,14Z)-eicosatetraenoate + reduced [NADPH--hemoprotein reductase] + O2 = (8R,9S)-epoxy-(5Z,11Z,14Z)-eicosatrienoate + oxidized [NADPH--hemoprotein reductase] + H2O + H(+). The catalysed reaction is (5Z,8Z,11Z,14Z)-eicosatetraenoate + reduced [NADPH--hemoprotein reductase] + O2 = (8S,9R)-epoxy-(5Z,11Z,14Z)-eicosatrienoate + oxidized [NADPH--hemoprotein reductase] + H2O + H(+). It catalyses the reaction (5Z,8Z,11Z,14Z)-eicosatetraenoate + reduced [NADPH--hemoprotein reductase] + O2 = (11R,12S)-epoxy-(5Z,8Z,14Z)-eicosatrienoate + oxidized [NADPH--hemoprotein reductase] + H2O + H(+). It carries out the reaction (5Z,8Z,11Z,14Z)-eicosatetraenoate + reduced [NADPH--hemoprotein reductase] + O2 = (11S,12R)-epoxy-(5Z,8Z,14Z)-eicosatrienoate + oxidized [NADPH--hemoprotein reductase] + H2O + H(+). The enzyme catalyses (5Z,8Z,11Z,14Z)-eicosatetraenoate + reduced [NADPH--hemoprotein reductase] + O2 = (14R,15S)-epoxy-(5Z,8Z,11Z)-eicosatrienoate + oxidized [NADPH--hemoprotein reductase] + H2O + H(+). The catalysed reaction is (5Z,8Z,11Z,14Z)-eicosatetraenoate + reduced [NADPH--hemoprotein reductase] + O2 = (14S,15R)-epoxy-(5Z,8Z,11Z)-eicosatrienoate + oxidized [NADPH--hemoprotein reductase] + H2O + H(+). It catalyses the reaction (5Z,8Z,11Z,14Z,17Z)-eicosapentaenoate + reduced [NADPH--hemoprotein reductase] + O2 = 8,9-epoxy-(5Z,11Z,14Z,17Z)-eicosatetraenoate + oxidized [NADPH--hemoprotein reductase] + H2O + H(+). It carries out the reaction (5Z,8Z,11Z,14Z,17Z)-eicosapentaenoate + reduced [NADPH--hemoprotein reductase] + O2 = 11,12-epoxy-(5Z,8Z,14Z,17Z)-eicosatetraenoate + oxidized [NADPH--hemoprotein reductase] + H2O + H(+). The enzyme catalyses (5Z,8Z,11Z,14Z,17Z)-eicosapentaenoate + reduced [NADPH--hemoprotein reductase] + O2 = 14,15-epoxy-(5Z,8Z,11Z,17Z)-eicosatetraenoate + oxidized [NADPH--hemoprotein reductase] + H2O + H(+). The catalysed reaction is (5Z,8Z,11Z,14Z,17Z)-eicosapentaenoate + reduced [NADPH--hemoprotein reductase] + O2 = (17S,18R)-epoxy-(5Z,8Z,11Z,14Z)-eicosatetraenoate + oxidized [NADPH--hemoprotein reductase] + H2O + H(+). It catalyses the reaction (5Z,8Z,11Z,14Z,17Z)-eicosapentaenoate + reduced [NADPH--hemoprotein reductase] + O2 = (17R,18S)-epoxy-(5Z,8Z,11Z,14Z)-eicosatetraenoate + oxidized [NADPH--hemoprotein reductase] + H2O + H(+). It functions in the pathway lipid metabolism; arachidonate metabolism. Its pathway is steroid metabolism. A cytochrome P450 monooxygenase involved in the metabolism of steroid hormones and fatty acids. Catalyzes the hydroxylation of carbon-hydrogen bonds. Metabolizes testosterone to 2alpha- and 16alpha-hydroxytestosterone. Catalyzes the epoxidation of double bonds of polyunsaturated fatty acids (PUFAs). Converts arachidonic acid (ARA, C20:4(n-6)) primarily to epoxyeicosatrienoic acid (EET) regioisomers, 8,9-, 11,12-, and 14,15-EET, with both R,S and S,R stereochemistry. Preferentially produces 11R,12S-EET enantiomer. To a lesser extent, catalyzes the hydroxylation of arachidonic acid producing hydroxyeicosatetraenoates (HETEs). Metabolizes eicosapentaenoic acid (EPA, C20:5(n-3)) to epoxyeicosatetraenoic acid (EETeTr) regioisomers, 8,9-, 11,12-, 14,15-, and 17,18-EETeTr, preferentially producing 17R,18S-EETeTr enantiomer. Mechanistically, uses molecular oxygen inserting one oxygen atom into a substrate, and reducing the second into a water molecule, with two electrons provided by NADPH via cytochrome P450 reductase (NADPH--hemoprotein reductase). The polypeptide is Cytochrome P450 2C11 (Cyp2c11) (Rattus norvegicus (Rat)).